The following is a 305-amino-acid chain: Glycine--tRNA ligase alpha subunit (305 aa).

Belongs to the class-II aminoacyl-tRNA synthetase family. Tetramer of two alpha and two beta subunits.

The protein localises to the cytoplasm. The catalysed reaction is tRNA(Gly) + glycine + ATP = glycyl-tRNA(Gly) + AMP + diphosphate. The chain is Glycine--tRNA ligase alpha subunit from Streptococcus pneumoniae (strain P1031).